A 630-amino-acid chain; its full sequence is Kelch-like protein 14 (630 aa).

One can recognise a BTB domain in the interval 33–153 (CDVTLTAQGQ…LYTANVTLSL (121 aa)). Residues 69–117 (GGGVGGQDGLGAPKDQQQQQQPQQQPPQQQQPPPQEEPGTPSSSPDDKL) are disordered. Over residues 84–96 (QQQQQQPQQQPPQ) the composition is skewed to low complexity. Residues 212–281 (VEDVLLLNFE…PAPELVERVQ (70 aa)) enclose the BACK domain. Kelch repeat units lie at residues 325–374 (MLLL…EVEN), 375–426 (FLFV…RLDK), 427–473 (HLYV…VHNG), 475–520 (IYIS…VMND), 522–572 (LYAI…VLDD), and 574–622 (IYLV…TVIL).

In terms of assembly, interacts with TOR1A. In terms of tissue distribution, expressed in the brain, primarily in neurons. In the cerebral cortex, mostly expressed in layers I and II (at protein level). Also observed in some neurons of the corpus striatum (at protein level). Expressed at high levels in the hippocampus, including in pyramidal cells of the CA1 and CA3 layers (at protein level). In the cerebellum, expression in Purkinje cells is higher than in granular cells (at protein level). Also detected in the medial septum, ventral pallidum, thalamus, hypothalamus, amygdala, inferior colliculi, locus caeruleus, peripyramidal nucleus, raphe nucleus, reticular formation, spinal trigeminal nucleus, and vestibular nuclei (at protein level). Low expression, if any, in glial cells (at protein level). Not observed in the corpus callosum.

It is found in the cytoplasm. It localises to the cytosol. The protein localises to the endoplasmic reticulum membrane. The chain is Kelch-like protein 14 (Klhl14) from Mus musculus (Mouse).